The chain runs to 159 residues: UPF0262 protein TM1040_3562 (159 aa).

Residues 1–21 are disordered; it reads MSRISQIELDDRNLPPPTPEI.

The protein belongs to the UPF0262 family.

This Ruegeria sp. (strain TM1040) (Silicibacter sp.) protein is UPF0262 protein TM1040_3562.